We begin with the raw amino-acid sequence, 236 residues long: Demethylmenaquinone methyltransferase (236 aa).

S-adenosyl-L-methionine contacts are provided by residues Thr58, Asp79, and 106–107; that span reads NA.

It belongs to the class I-like SAM-binding methyltransferase superfamily. MenG/UbiE family.

The enzyme catalyses a 2-demethylmenaquinol + S-adenosyl-L-methionine = a menaquinol + S-adenosyl-L-homocysteine + H(+). Its pathway is quinol/quinone metabolism; menaquinone biosynthesis; menaquinol from 1,4-dihydroxy-2-naphthoate: step 2/2. Its function is as follows. Methyltransferase required for the conversion of demethylmenaquinol (DMKH2) to menaquinol (MKH2). The polypeptide is Demethylmenaquinone methyltransferase (Listeria welshimeri serovar 6b (strain ATCC 35897 / DSM 20650 / CCUG 15529 / CIP 8149 / NCTC 11857 / SLCC 5334 / V8)).